A 511-amino-acid polypeptide reads, in one-letter code: Probable endopeptidase p60 (511 aa).

Residues Met-1–Ala-27 form the signal peptide. A LysM 1 domain is found at Asn-28–Ile-71. The SH3b domain maps to Lys-78–Lys-142. Residues Ser-175–Val-218 form the LysM 2 domain. Low complexity-rich tracts occupy residues Thr-229–Pro-257 and Lys-264–Ala-282. A disordered region spans residues Thr-229–Ala-291. The LysM 3 domain maps to Ala-297 to Val-341. Low complexity-rich tracts occupy residues Lys-347–Ala-362 and Thr-372–Gln-390. The disordered stretch occupies residues Lys-347–Gln-390. Positions Ser-393–Val-511 constitute a NlpC/P60 domain. The Nucleophile role is filled by Cys-423. His-473 serves as the catalytic Proton acceptor. The active site involves Asp-485.

It belongs to the peptidase C40 family.

This major extracellular protein may be involved in the invasion of non-professional phagocytic cells by Listeria. This is Probable endopeptidase p60 (iap) from Listeria grayi (Listeria murrayi).